Consider the following 1336-residue polypeptide: Vascular endothelial growth factor receptor 1 (1336 aa).

An N-terminal signal peptide occupies residues 1–22 (MVSCWDTAVLPCALLGCLLLTG). Residues 23 to 758 (YCSGSKLKGP…QGTSDKSNLE (736 aa)) are Extracellular-facing. 7 Ig-like C2-type domains span residues 32–121 (PELS…KKME), 151–214 (GREL…VNGH), 230–327 (LDVQ…TSVH), 335–421 (SVKH…LTAT), 429–549 (QIYE…RDIR), 556–655 (PNGF…EVLV), and 661–747 (PLLL…AYLT). Disulfide bonds link C53/C107 and C158/C207. N-linked (GlcNAc...) asparagine glycosylation is found at N100, N164, N196, and N251. The cysteines at positions 252 and 311 are disulfide-linked. N-linked (GlcNAc...) asparagine glycans are attached at residues N323, N417, N474, N516, N597, N625, N666, and N713. 2 disulfide bridges follow: C454–C535 and C577–C636. A disulfide bond links C682 and C731. The chain crosses the membrane as a helical span at residues 759–780 (LITLTCTCVAATLFWLLLTLFI). Residues 781 to 1336 (RKLKRSSSEV…SVVLYSSPPA (556 aa)) lie on the Cytoplasmic side of the membrane. The region spanning 827 to 1158 (LKLGKSLGRG…ELVEKLGDLL (332 aa)) is the Protein kinase domain. ATP contacts are provided by residues 833-841 (LGRGAFGKV) and K861. Y914 carries the phosphotyrosine; by autocatalysis modification. Over residues 941 to 957 (KKEKLEPDLEQDQKPRL) the composition is skewed to basic and acidic residues. Residues 941–982 (KKEKLEPDLEQDQKPRLDSVSSSESFTSSGFQEDKSVSDVEG) form a disordered region. Over residues 959–969 (SVSSSESFTSS) the composition is skewed to low complexity. The active-site Proton acceptor is the D1022. Y1053, Y1169, Y1213, Y1242, Y1325, and Y1331 each carry phosphotyrosine; by autocatalysis. Positions 1304–1326 (RQEDEDDPELGKESCCSPPPDYN) are disordered.

It belongs to the protein kinase superfamily. Tyr protein kinase family. CSF-1/PDGF receptor subfamily. As to quaternary structure, interacts with VEGFA, VEGFB and PGF. Monomer in the absence of bound VEGFA, VEGFB or PGF. Homodimer in the presence of bound VEGFA, VEGFB and PGF. Can also form a heterodimer with KDR. Interacts (tyrosine phosphorylated) with CBL, CRK, GRB2, NCK1, PIK3R1, PLCG, PSEN1 and PTPN11. Probably interacts with PTPRB. Interacts with RACK1. Identified in a complex with CBL and CD2AP. In terms of processing, N-glycosylated. Post-translationally, ubiquitinated after VEGFA-mediated autophosphorylation, leading to proteolytic degradation. Autophosphorylated on tyrosine residues upon ligand binding. Autophosphorylation occurs in trans, i.e. one subunit of the dimeric receptor phosphorylates tyrosine residues on the other subunit. Phosphorylation at Tyr-1169 is important for interaction with PLCG. Phosphorylation at Tyr-1213 is important for interaction with PIK3R1, PTPN11, GRB2, and PLCG. Phosphorylation at Tyr-1331 is important for endocytosis and for interaction with CBL, NCK1 and CRK. Is probably dephosphorylated by PTPRB.

The protein localises to the cell membrane. It is found in the endosome. It catalyses the reaction L-tyrosyl-[protein] + ATP = O-phospho-L-tyrosyl-[protein] + ADP + H(+). Its activity is regulated as follows. Present in an inactive conformation in the absence of bound ligand. Binding of VEGFA, VEGFB or PGF leads to dimerization and activation by autophosphorylation on tyrosine residues. Tyrosine-protein kinase that acts as a cell-surface receptor for VEGFA, VEGFB and PGF, and plays an essential role in the development of embryonic vasculature, the regulation of angiogenesis, cell survival, cell migration, macrophage function, chemotaxis, and cancer cell invasion. Acts as a positive regulator of postnatal retinal hyaloid vessel regression. May play an essential role as a negative regulator of embryonic angiogenesis by inhibiting excessive proliferation of endothelial cells. Can promote endothelial cell proliferation, survival and angiogenesis in adulthood. Its function in promoting cell proliferation seems to be cell-type specific. Promotes PGF-mediated proliferation of endothelial cells, and proliferation of some types of cancer cells, but does not promote proliferation of normal fibroblasts. Has very high affinity for VEGFA and relatively low protein kinase activity; may function as a negative regulator of VEGFA signaling by limiting the amount of free VEGFA and preventing its binding to KDR. Modulates KDR signaling by forming heterodimers with KDR. Ligand binding leads to the activation of several signaling cascades. Activation of PLCG leads to the production of the cellular signaling molecules diacylglycerol and inositol 1,4,5-trisphosphate and the activation of protein kinase C. Mediates phosphorylation of PIK3R1, the regulatory subunit of phosphatidylinositol 3-kinase, leading to the activation of phosphatidylinositol kinase and the downstream signaling pathway. Mediates activation of MAPK1/ERK2, MAPK3/ERK1 and the MAP kinase signaling pathway, as well as of the AKT1 signaling pathway. Phosphorylates SRC, YES1 and PLCG, and may also phosphorylate CBL. Promotes phosphorylation of AKT1 and PTK2/FAK1. In Rattus norvegicus (Rat), this protein is Vascular endothelial growth factor receptor 1 (Flt1).